The primary structure comprises 245 residues: Probable transcriptional regulatory protein Cbei_4222 (245 aa).

Belongs to the TACO1 family.

It localises to the cytoplasm. This is Probable transcriptional regulatory protein Cbei_4222 from Clostridium beijerinckii (strain ATCC 51743 / NCIMB 8052) (Clostridium acetobutylicum).